An 87-amino-acid chain; its full sequence is CRISPR-associated endoribonuclease Cas2 (87 aa).

Aspartate 8 contributes to the Mg(2+) binding site.

It belongs to the CRISPR-associated endoribonuclease Cas2 protein family. Homodimer, forms a heterotetramer with a Cas1 homodimer. It depends on Mg(2+) as a cofactor.

Functionally, CRISPR (clustered regularly interspaced short palindromic repeat), is an adaptive immune system that provides protection against mobile genetic elements (viruses, transposable elements and conjugative plasmids). CRISPR clusters contain sequences complementary to antecedent mobile elements and target invading nucleic acids. CRISPR clusters are transcribed and processed into CRISPR RNA (crRNA). Functions as a ssRNA-specific endoribonuclease. Involved in the integration of spacer DNA into the CRISPR cassette. The polypeptide is CRISPR-associated endoribonuclease Cas2 (Frankia alni (strain DSM 45986 / CECT 9034 / ACN14a)).